The sequence spans 212 residues: Acyl-homoserine-lactone synthase (212 aa).

Belongs to the autoinducer synthase family.

It carries out the reaction a fatty acyl-[ACP] + S-adenosyl-L-methionine = an N-acyl-L-homoserine lactone + S-methyl-5'-thioadenosine + holo-[ACP] + H(+). Its function is as follows. Required for the synthesis of OHHL (N-(3-oxohexanoyl)-L-homoserine lactone), an autoinducer molecule which binds to the EchR transcriptional regulator. The polypeptide is Acyl-homoserine-lactone synthase (echI) (Dickeya chrysanthemi (Pectobacterium chrysanthemi)).